Reading from the N-terminus, the 333-residue chain is D-fructose 1,6-bisphosphatase class 2/sedoheptulose 1,7-bisphosphatase (333 aa).

Residues aspartate 33, glutamate 57, aspartate 85, and glutamate 88 each contribute to the Mn(2+) site. Residues 88–90 (EGT), tyrosine 119, 164–166 (RTR), and 186–188 (DGD) each bind substrate. Glutamate 213 provides a ligand contact to Mn(2+).

The protein belongs to the FBPase class 2 family. In terms of assembly, homotetramer. It depends on Mn(2+) as a cofactor.

The catalysed reaction is beta-D-fructose 1,6-bisphosphate + H2O = beta-D-fructose 6-phosphate + phosphate. The enzyme catalyses D-sedoheptulose 1,7-bisphosphate + H2O = D-sedoheptulose 7-phosphate + phosphate. The protein operates within carbohydrate biosynthesis; Calvin cycle. Catalyzes the hydrolysis of fructose 1,6-bisphosphate (Fru 1,6-P2) and sedoheptulose 1,7-bisphosphate (Sed 1,7-P2) to fructose 6-phosphate and sedoheptulose 7-phosphate, respectively. This Prochlorococcus marinus (strain AS9601) protein is D-fructose 1,6-bisphosphatase class 2/sedoheptulose 1,7-bisphosphatase.